Consider the following 288-residue polypeptide: Putative aryl-alcohol dehydrogenase AAD10 (288 aa).

The protein belongs to the aldo/keto reductase family. Aldo/keto reductase 2 subfamily.

This is Putative aryl-alcohol dehydrogenase AAD10 (AAD10) from Saccharomyces cerevisiae (strain ATCC 204508 / S288c) (Baker's yeast).